Reading from the N-terminus, the 113-residue chain is UPF0482 protein YnfB (113 aa).

A signal peptide spans 1–28; sequence MNYTLSKRLCLTAMLTLAAVVYTTSAFA.

Belongs to the UPF0482 family.

This is UPF0482 protein YnfB from Salmonella arizonae (strain ATCC BAA-731 / CDC346-86 / RSK2980).